A 278-amino-acid polypeptide reads, in one-letter code: Ribosomal RNA small subunit methyltransferase A (278 aa).

The S-adenosyl-L-methionine site is built by asparagine 18, leucine 20, glycine 45, glutamate 66, aspartate 89, and asparagine 110.

It belongs to the class I-like SAM-binding methyltransferase superfamily. rRNA adenine N(6)-methyltransferase family. RsmA subfamily.

Its subcellular location is the cytoplasm. The catalysed reaction is adenosine(1518)/adenosine(1519) in 16S rRNA + 4 S-adenosyl-L-methionine = N(6)-dimethyladenosine(1518)/N(6)-dimethyladenosine(1519) in 16S rRNA + 4 S-adenosyl-L-homocysteine + 4 H(+). In terms of biological role, specifically dimethylates two adjacent adenosines (A1518 and A1519) in the loop of a conserved hairpin near the 3'-end of 16S rRNA in the 30S particle. May play a critical role in biogenesis of 30S subunits. The chain is Ribosomal RNA small subunit methyltransferase A from Cupriavidus metallidurans (strain ATCC 43123 / DSM 2839 / NBRC 102507 / CH34) (Ralstonia metallidurans).